The following is a 129-amino-acid chain: Large-conductance mechanosensitive channel (129 aa).

The next 2 membrane-spanning stretches (helical) occupy residues 10–30 (FAVK…GAFG) and 70–90 (AVML…VIAI).

It belongs to the MscL family. Homopentamer.

The protein localises to the cell inner membrane. Its function is as follows. Channel that opens in response to stretch forces in the membrane lipid bilayer. May participate in the regulation of osmotic pressure changes within the cell. In Actinobacillus pleuropneumoniae serotype 3 (strain JL03), this protein is Large-conductance mechanosensitive channel.